Reading from the N-terminus, the 526-residue chain is Rho guanine nucleotide exchange factor 3 (526 aa).

Residues 20–40 form a disordered region; that stretch reads ELPPASGPAKDAEEPSNKRVK. Phosphoserine occurs at positions 47 and 70. Residues 122–304 enclose the DH domain; that stretch reads KRQEAIFELS…QGIVAEINTK (183 aa). One can recognise a PH domain in the interval 291–449; that stretch reads INIIQGIVAE…WLNCIRQAKE (159 aa). The interval 464 to 526 is disordered; that stretch reads EGSFLNPTTG…GNSRHGESNV (63 aa). Residues 466–475 show a composition bias toward polar residues; sequence SFLNPTTGSR.

In terms of assembly, interacts with RHOA and RHOB. Widely expressed. Highest levels are found in adult brain and skeletal muscle. Lower levels are found in heart and kidney.

The protein resides in the cytoplasm. Functionally, acts as a guanine nucleotide exchange factor (GEF) for RhoA and RhoB GTPases. This chain is Rho guanine nucleotide exchange factor 3 (ARHGEF3), found in Homo sapiens (Human).